The sequence spans 598 residues: Serine/threonine-protein kinase PLK1 (598 aa).

The tract at residues Met-1 to Gly-23 is disordered. Thr-10 bears the Phosphothreonine; by PKA; in vitro mark. 2 positions are modified to phosphoserine: Ser-25 and Ser-26. The Protein kinase domain maps to Tyr-44–Phe-296. Residues Leu-50 to Cys-58, Lys-73, and Glu-122 contribute to the ATP site. Asp-167 (proton acceptor) is an active-site residue. Residues Lys-169–Asn-172 and Asp-185 each bind ATP. Positions Asp-185–Glu-212 are activation loop. Thr-201 is subject to Phosphothreonine; by PKA. Ser-260 and Ser-326 each carry phosphoserine; by autocatalysis. Residues Arg-328–Leu-331 carry the D-box that targets the protein for proteasomal degradation in anaphase motif. Ser-340 carries the phosphoserine; by CDK1 modification. One can recognise a POLO box 1 domain in the interval Trp-404–Glu-482. The tract at residues Ala-487–Arg-501 is linker. Residues Phe-504 to Ser-586 form the POLO box 2 domain. The interval His-532–Lys-534 is important for interaction with phosphorylated proteins.

Belongs to the protein kinase superfamily. Ser/Thr protein kinase family. As to quaternary structure, interacts with plk1 and kif2a. Interacts with fbxo5. Post-translationally, activated by phosphorylation on Thr-201 during M phase. Phosphorylated by stk10, leading to activation during oocyte maturation. In terms of processing, ubiquitinated by the anaphase promoting complex/cyclosome (APC/C) in anaphase and following DNA damage, leading to its degradation by the proteasome. Protein levels are down-regulated by proteasomal degradation in anaphase.

The protein localises to the nucleus. It is found in the cytoplasm. Its subcellular location is the cytoskeleton. The protein resides in the microtubule organizing center. It localises to the centrosome. The protein localises to the spindle. It is found in the midbody. The enzyme catalyses L-seryl-[protein] + ATP = O-phospho-L-seryl-[protein] + ADP + H(+). The catalysed reaction is L-threonyl-[protein] + ATP = O-phospho-L-threonyl-[protein] + ADP + H(+). Its activity is regulated as follows. Activated by phosphorylation of Thr-201. In terms of biological role, serine/threonine-protein kinase that performs several important functions throughout M phase of the cell cycle, including the regulation of centrosome maturation and spindle assembly, the removal of cohesins from chromosome arms, the inactivation of anaphase-promoting complex/cyclosome (APC/C) inhibitors, and the regulation of mitotic exit and cytokinesis. Polo-like kinase proteins act by binding and phosphorylating proteins that are already phosphorylated on a specific motif recognized by the POLO box domains. Phosphorylates cdc25, pkmyt1/myt1, stag2/sa2, tpx2. Plays multiple essential roles during mitosis. Phosphorylates the N-terminal domain of cdc25, which leads to cyclin b-cdc2 activation and mitotic entry. Also required for organization of bipolar spindles, and for exit from mitosis. Involved in kinetochore functions and sister chromatid cohesion by phosphorylating stag2/sa2. This is Serine/threonine-protein kinase PLK1 (plk1) from Xenopus laevis (African clawed frog).